The primary structure comprises 182 residues: uncharacterized protein (182 aa).

Transmembrane regions (helical) follow at residues 76–96 (LLLA…LALA) and 114–130 (LDLL…LIGA).

It is found in the membrane. This is an uncharacterized protein from Saccharomyces cerevisiae (strain ATCC 204508 / S288c) (Baker's yeast).